A 258-amino-acid polypeptide reads, in one-letter code: Imidazole glycerol phosphate synthase subunit HisF (258 aa).

Residues D11 and D130 contribute to the active site.

The protein belongs to the HisA/HisF family. In terms of assembly, heterodimer of HisH and HisF.

The protein resides in the cytoplasm. It carries out the reaction 5-[(5-phospho-1-deoxy-D-ribulos-1-ylimino)methylamino]-1-(5-phospho-beta-D-ribosyl)imidazole-4-carboxamide + L-glutamine = D-erythro-1-(imidazol-4-yl)glycerol 3-phosphate + 5-amino-1-(5-phospho-beta-D-ribosyl)imidazole-4-carboxamide + L-glutamate + H(+). It functions in the pathway amino-acid biosynthesis; L-histidine biosynthesis; L-histidine from 5-phospho-alpha-D-ribose 1-diphosphate: step 5/9. Functionally, IGPS catalyzes the conversion of PRFAR and glutamine to IGP, AICAR and glutamate. The HisF subunit catalyzes the cyclization activity that produces IGP and AICAR from PRFAR using the ammonia provided by the HisH subunit. The protein is Imidazole glycerol phosphate synthase subunit HisF of Citrobacter koseri (strain ATCC BAA-895 / CDC 4225-83 / SGSC4696).